A 243-amino-acid chain; its full sequence is Probable intron-encoded endonuclease aI3 (243 aa).

It belongs to the LAGLIDADG endonuclease family.

It localises to the mitochondrion. Functionally, mitochondrial DNA endonuclease involved in intron homing. The sequence is that of Probable intron-encoded endonuclease aI3 (aI3) from Dictyostelium citrinum (Slime mold).